A 273-amino-acid polypeptide reads, in one-letter code: Putative pyruvate, phosphate dikinase regulatory protein (273 aa).

149 to 156 (GPSRTSKT) is an ADP binding site.

Belongs to the pyruvate, phosphate/water dikinase regulatory protein family. PDRP subfamily.

The enzyme catalyses N(tele)-phospho-L-histidyl/L-threonyl-[pyruvate, phosphate dikinase] + ADP = N(tele)-phospho-L-histidyl/O-phospho-L-threonyl-[pyruvate, phosphate dikinase] + AMP + H(+). It catalyses the reaction N(tele)-phospho-L-histidyl/O-phospho-L-threonyl-[pyruvate, phosphate dikinase] + phosphate + H(+) = N(tele)-phospho-L-histidyl/L-threonyl-[pyruvate, phosphate dikinase] + diphosphate. In terms of biological role, bifunctional serine/threonine kinase and phosphorylase involved in the regulation of the pyruvate, phosphate dikinase (PPDK) by catalyzing its phosphorylation/dephosphorylation. This chain is Putative pyruvate, phosphate dikinase regulatory protein, found in Rickettsia prowazekii (strain Madrid E).